The chain runs to 245 residues: Polyhedrin (245 aa).

Residues 32 to 35 (KRKK) are nuclear localization signal.

The protein belongs to the polyhedrin family.

Its subcellular location is the host nucleus. Major component of the virus occlusion bodies which are large proteinaceous structures termed polyhedra. These structures serve as the protective package for the virus particles outside the infected host and allow natural transmission of virus between insect hosts, assisting persistence in the environment. Forms the paracrystalline lattice of polyhedra and interacts with enveloped virions as well as other accessory molecules and structures to form a mature viral occlusion body. This chain is Polyhedrin (PH), found in Lepidoptera (butterflies and moths).